An 87-amino-acid chain; its full sequence is Small ribosomal subunit protein bS20 (87 aa).

Residues methionine 1–arginine 25 form a disordered region. A compositionally biased stretch (basic residues) spans alanine 7–serine 22.

Belongs to the bacterial ribosomal protein bS20 family.

In terms of biological role, binds directly to 16S ribosomal RNA. The polypeptide is Small ribosomal subunit protein bS20 (Bordetella bronchiseptica (strain ATCC BAA-588 / NCTC 13252 / RB50) (Alcaligenes bronchisepticus)).